The chain runs to 113 residues: MEIEKNNRINSLLEFYEQLLTPKQKEYITLYYADDYSLGEISEEFQVSRQAVYDNIKRTVNILEKYEQQLHLLSNFEVRNAKFDQIRAYINQKYPEDTELKHFLDDLEKSEEE.

This sequence belongs to the UPF0122 family.

Functionally, might take part in the signal recognition particle (SRP) pathway. This is inferred from the conservation of its genetic proximity to ftsY/ffh. May be a regulatory protein. The protein is UPF0122 protein PEPE_0845 of Pediococcus pentosaceus (strain ATCC 25745 / CCUG 21536 / LMG 10740 / 183-1w).